Consider the following 423-residue polypeptide: Inactive autotransporter heptosyltransferase BimC (423 aa).

Polar residues predominate over residues 1 to 10; the sequence is MPKVTFSGSA. The disordered stretch occupies residues 1-49; the sequence is MPKVTFSGSAPTLGVHAPPALDPRQPASPPPAASNGTHARGFSPPADMP. Residues C371, C374, C390, and C402 each contribute to the Fe(3+) site.

Belongs to the glycosyltransferase 9 family. As to quaternary structure, homotrimer or homotetramer. Fe(3+) is required as a cofactor.

The protein resides in the cell inner membrane. It is found in the cytoplasm. Its function is as follows. Iron-binding protein which is required for the asymmetric polar distribution of the autotransporter BimA on the bacterial surface prior to its translocation into bacterial periplasm. Lacks heptosyltransferase activity. This Burkholderia thailandensis (strain ATCC 700388 / DSM 13276 / CCUG 48851 / CIP 106301 / E264) protein is Inactive autotransporter heptosyltransferase BimC.